The chain runs to 218 residues: Thiopurine S-methyltransferase (218 aa).

S-adenosyl-L-methionine-binding residues include tryptophan 10, leucine 45, glutamate 66, and arginine 123.

It belongs to the class I-like SAM-binding methyltransferase superfamily. TPMT family.

It is found in the cytoplasm. It catalyses the reaction S-adenosyl-L-methionine + a thiopurine = S-adenosyl-L-homocysteine + a thiopurine S-methylether.. The sequence is that of Thiopurine S-methyltransferase from Xanthomonas axonopodis pv. citri (strain 306).